The sequence spans 199 residues: Photosystem II D1 precursor processing protein PSB27-H2, chloroplastic (199 aa).

It belongs to the Psb27 family. As to quaternary structure, interacts with the C-terminus of both the precursor and mature form of D1.

Its subcellular location is the plastid. The protein localises to the chloroplast thylakoid lumen. In terms of biological role, required, but not essential, for D1 (psbA) precursor processing and thus correct photosystem II assembly (PSII). This is Photosystem II D1 precursor processing protein PSB27-H2, chloroplastic (PSB27-2) from Arabidopsis thaliana (Mouse-ear cress).